A 529-amino-acid chain; its full sequence is Potassium voltage-gated channel subfamily A member 6 (529 aa).

Residues 1-33 are disordered; the sequence is MRSEKSLTLAAPGEVRGPEGEQQDAGDFPEAGG. The Cytoplasmic portion of the chain corresponds to 1-171; sequence MRSEKSLTLA…LLFEYPESSG (171 aa). At Ser-3 the chain carries Phosphoserine. The helical transmembrane segment at 172-193 threads the bilayer; it reads PARGIAIVSVLVILISIVIFCL. Residues 194–262 lie on the Extracellular side of the membrane; the sequence is ETLPQFRVDG…TLGGSFFTDP (69 aa). Positions 210-220 are enriched in low complexity; that stretch reads GVSRVSPVSRG. The disordered stretch occupies residues 210-233; the sequence is GVSRVSPVSRGSQEEEEDEDDSYT. The chain crosses the membrane as a helical span at residues 263–284; sequence FFLVETLCIVWFTFELLVRFSA. The S-palmitoyl cysteine moiety is linked to residue Cys-285. Over 285 to 295 the chain is Cytoplasmic; that stretch reads CPSKPAFFRNI. Residues 296–316 traverse the membrane as a helical segment; that stretch reads MNIIDLVAIFPYFITLGTELV. Over 317–337 the chain is Extracellular; sequence QQQEQQPASGGGGQNGQQAMS. The chain crosses the membrane as a helical; Voltage-sensor span at residues 338-358; that stretch reads LAILRVIRLVRVFRIFKLSRH. Over 359 to 373 the chain is Cytoplasmic; the sequence is SKGLQILGKTLQASM. Positions 360–373 are S4-S5 linker; it reads KGLQILGKTLQASM. Residues 374–395 form a helical membrane-spanning segment; the sequence is RELGLLIFFLFIGVILFSSAVY. The Extracellular portion of the chain corresponds to 396–409; it reads FAEADDDDSLFPSI. The helical intramembrane region spans 410–421; it reads PDAFWWAVVTMT. Positions 422–427 match the Selectivity filter motif; that stretch reads TVGYGD. Residues 422–429 lie within the membrane without spanning it; the sequence is TVGYGDMY. Over 430 to 436 the chain is Extracellular; that stretch reads PMTVGGK. The chain crosses the membrane as a helical span at residues 437–465; the sequence is IVGSLCAIAGVLTIALPVPVIVSNFNYFY. The Cytoplasmic segment spans residues 466-529; sequence HRETEQEEQG…YAEKRMLTEV (64 aa). The disordered stretch occupies residues 488–513; sequence DLRATDNGLGKPDFPEANRERRPSYL. Residues 500 to 510 are compositionally biased toward basic and acidic residues; it reads DFPEANRERRP. Residue Ser-511 is modified to Phosphoserine; by PKA. Residues 527–529 carry the PDZ-binding motif; that stretch reads TEV.

It belongs to the potassium channel family. A (Shaker) (TC 1.A.1.2) subfamily. Kv1.6/KCNA6 sub-subfamily. As to quaternary structure, homotetramer and heterotetramer of potassium channel proteins. Interacts with KCNAB1 and KCNAB2.

It is found in the cell membrane. The enzyme catalyses K(+)(in) = K(+)(out). In terms of biological role, voltage-gated potassium channel that mediates transmembrane potassium transport in excitable membranes. Forms tetrameric potassium-selective channels through which potassium ions pass in accordance with their electrochemical gradient. The channel alternates between opened and closed conformations in response to the voltage difference across the membrane. Can form functional homotetrameric channels and heterotetrameric channels that contain variable proportions of KCNA1, KCNA2, KCNA4, KCNA6, and possibly other family members as well; channel properties depend on the type of alpha subunits that are part of the channel. Channel properties are modulated by cytoplasmic beta subunits that regulate the subcellular location of the alpha subunits and promote rapid inactivation. Homotetrameric channels display rapid activation and slow inactivation. The chain is Potassium voltage-gated channel subfamily A member 6 (KCNA6) from Homo sapiens (Human).